The following is a 279-amino-acid chain: tRNA (guanine-N(1)-)-methyltransferase (279 aa).

S-adenosyl-L-methionine-binding positions include G117 and 141–146 (LGDYVL). Residues 256 to 279 (WTPDGSGFRAGGDPVADSSDTNEP) are disordered.

Belongs to the RNA methyltransferase TrmD family. Homodimer.

The protein localises to the cytoplasm. It carries out the reaction guanosine(37) in tRNA + S-adenosyl-L-methionine = N(1)-methylguanosine(37) in tRNA + S-adenosyl-L-homocysteine + H(+). Its function is as follows. Specifically methylates guanosine-37 in various tRNAs. The polypeptide is tRNA (guanine-N(1)-)-methyltransferase (Kineococcus radiotolerans (strain ATCC BAA-149 / DSM 14245 / SRS30216)).